Consider the following 412-residue polypeptide: MKAARFAMHSARSLSSVGLVPREVELFSRYSPSPLSMKQLLDFGSDNACERTSFSFLRQELPVRLANILKEIDVLPDRLTNTSSVQLVKSWYIQSLMELVEFHEKSPEDQKNLSDFVDTLIKVRNRHHNVVPTMAQGILEYKDTCTVDPVTNQSLQYFLDRFYMNRISTRMLMNQHILIFSDSQTGNPSHIGSIDPKCDVVAVIQDAFESSKMLCDQYYLTSPELKLTQVNGKFPGQPIHIVYVPSHLHHMLFELFKNAMRATVERQESWPSLTPVEVIVVLGKEDLTIKISDRGGGVPLRITDRLFSYMYSTAPTPVMDNSRNAPLAGFGYGLPISRLYAKYFQGDLNLYSLSGYGTDAIIYLKALSSESVEKLPVFNKSAFKHYQMSSEADDWCIPSREPRNLSKEKMAM.

Residues isoleucine 138 to serine 368 enclose the Histidine kinase domain. Residues glutamate 254–arginine 261, aspartate 293, serine 312–threonine 313, and glycine 329–leucine 334 each bind ATP.

This sequence belongs to the PDK/BCKDK protein kinase family. Homodimer. Interacts with the pyruvate dehydrogenase complex subunit DLAT, and is part of the multimeric pyruvate dehydrogenase complex that contains multiple copies of pyruvate dehydrogenase (E1), dihydrolipoamide acetyltransferase (DLAT, E2) and lipoamide dehydrogenase (DLD, E3). As to expression, detected in skeletal muscle and heart.

It localises to the mitochondrion matrix. The enzyme catalyses L-seryl-[pyruvate dehydrogenase E1 alpha subunit] + ATP = O-phospho-L-seryl-[pyruvate dehydrogenase E1 alpha subunit] + ADP + H(+). In terms of biological role, kinase that plays a key role in regulation of glucose and fatty acid metabolism and homeostasis via phosphorylation of the pyruvate dehydrogenase subunits PDHA1 and PDHA2. This inhibits pyruvate dehydrogenase activity, and thereby regulates metabolite flux through the tricarboxylic acid cycle, down-regulates aerobic respiration and inhibits the formation of acetyl-coenzyme A from pyruvate. Inhibition of pyruvate dehydrogenase decreases glucose utilization and increases fat metabolism in response to prolonged fasting and starvation. Plays an important role in maintaining normal blood glucose levels under starvation, and is involved in the insulin signaling cascade. Via its regulation of pyruvate dehydrogenase activity, plays an important role in maintaining normal blood pH and in preventing the accumulation of ketone bodies under starvation. In the fed state, mediates cellular responses to glucose levels and to a high-fat diet. Regulates both fatty acid oxidation and de novo fatty acid biosynthesis. Plays a role in the generation of reactive oxygen species. Protects detached epithelial cells against anoikis. Plays a role in cell proliferation via its role in regulating carbohydrate and fatty acid metabolism. The chain is [Pyruvate dehydrogenase (acetyl-transferring)] kinase isozyme 4, mitochondrial (PDK4) from Ictidomys tridecemlineatus (Thirteen-lined ground squirrel).